The following is a 361-amino-acid chain: Hsc70-interacting protein (361 aa).

Residues 39-98 form a disordered region; that stretch reads GGTIPPAPASTSTDETSKGKAEEQPEEPVKSPEPESEESDLEIDNEGVIEPDNDDPQEMG. Over residues 53–71 the composition is skewed to basic and acidic residues; the sequence is ETSKGKAEEQPEEPVKSPE. The segment covering 72-98 has biased composition (acidic residues); that stretch reads PESEESDLEIDNEGVIEPDNDDPQEMG. TPR repeat units follow at residues 112-145, 147-179, and 181-213; these read ANEKKMEAINALSEGDLQKAVNLFTDAIKLNPCL, ILYAKRASVFVKLQKPNAAIRDCDRAIKINPDS, and QTYKWRGKAHRLLGHWEEAAHDLALACKLDYDE. Over residues 254–270 the composition is skewed to basic and acidic residues; it reads KAREEHERAQREEEARR. The disordered stretch occupies residues 254-292; it reads KAREEHERAQREEEARRQAGGAQFGGFPGGFPGGFPGAM. Residues 275 to 292 are compositionally biased toward gly residues; the sequence is AQFGGFPGGFPGGFPGAM. Residues 311–350 form the STI1 domain; it reads DPEVLAAMQDPEVMAAFQDVAQNPANMSKYQNNPKVMSLI.

This sequence belongs to the FAM10 family. Homotetramer. Interacts with HSC70 as well as DNAJ homologs and HSP90.

It localises to the cytoplasm. One HIP oligomer binds the ATPase domains of at least two HSC70 molecules dependent on activation of the HSC70 ATPase by HSP40. Stabilizes the ADP state of HSC70 that has a high affinity for substrate protein. Through its own chaperone activity, it may contribute to the interaction of HSC70 with various target proteins. This Gallus gallus (Chicken) protein is Hsc70-interacting protein (ST13).